We begin with the raw amino-acid sequence, 89 residues long: Small ribosomal subunit protein uS15 (89 aa).

This sequence belongs to the universal ribosomal protein uS15 family. As to quaternary structure, part of the 30S ribosomal subunit. Forms a bridge to the 50S subunit in the 70S ribosome, contacting the 23S rRNA.

In terms of biological role, one of the primary rRNA binding proteins, it binds directly to 16S rRNA where it helps nucleate assembly of the platform of the 30S subunit by binding and bridging several RNA helices of the 16S rRNA. Functionally, forms an intersubunit bridge (bridge B4) with the 23S rRNA of the 50S subunit in the ribosome. The sequence is that of Small ribosomal subunit protein uS15 from Tolumonas auensis (strain DSM 9187 / NBRC 110442 / TA 4).